A 473-amino-acid polypeptide reads, in one-letter code: 3-isopropylmalate dehydratase large subunit (473 aa).

3 residues coordinate [4Fe-4S] cluster: Cys-354, Cys-414, and Cys-417.

It belongs to the aconitase/IPM isomerase family. LeuC type 1 subfamily. Heterodimer of LeuC and LeuD. It depends on [4Fe-4S] cluster as a cofactor.

The catalysed reaction is (2R,3S)-3-isopropylmalate = (2S)-2-isopropylmalate. Its pathway is amino-acid biosynthesis; L-leucine biosynthesis; L-leucine from 3-methyl-2-oxobutanoate: step 2/4. Its function is as follows. Catalyzes the isomerization between 2-isopropylmalate and 3-isopropylmalate, via the formation of 2-isopropylmaleate. This is 3-isopropylmalate dehydratase large subunit from Mycobacterium ulcerans (strain Agy99).